We begin with the raw amino-acid sequence, 236 residues long: Bacterial rhodopsin CSR3 (236 aa).

Topologically, residues 1–3 (MDA) are extracellular. The chain crosses the membrane as a helical span at residues 4-25 (VAVVYGITAAGFAVGVAIVGYL). The Cytoplasmic portion of the chain corresponds to 26-34 (YASLEGSEE). A helical membrane pass occupies residues 35–56 (RSILAALALIPGFAGISYVAMA). The Extracellular portion of the chain corresponds to 57–70 (FGIGTVTIGETTLV). A helical membrane pass occupies residues 71–92 (GFRYLDWVVTTPLLVGFVGYAA). Over 93 to 95 (GAS) the chain is Cytoplasmic. A helical transmembrane segment spans residues 96 to 118 (RRAIFGVMVADALMILTGVGAVV). Over 119-122 (ADGT) the chain is Extracellular. The chain crosses the membrane as a helical span at residues 123–150 (LKWVLFGVSTVFHVSLFAYLYLVFPRSV). Residues 151 to 153 (PDD) are Cytoplasmic-facing. Residues 154-181 (PQRIGLFSLLKNHIGLLWIAYPLVWLAG) traverse the membrane as a helical segment. At 182–189 (PEGLGLAT) the chain is on the extracellular side. Residues 190-222 (YVGVSITYAFLDLLAKVPYVYFFYARRQVFATK) form a helical membrane-spanning segment. Position 205 is an N6-(retinylidene)lysine (Lys205). Residues 223–236 (LLRDSGEVTATPAD) are Cytoplasmic-facing.

Belongs to the archaeal/bacterial/fungal opsin family.

The protein resides in the cell membrane. In Haloarcula vallismortis (Halobacterium vallismortis), this protein is Bacterial rhodopsin CSR3.